The sequence spans 140 residues: Cytochrome c-type biogenesis protein CcmE (140 aa).

Residues 1-7 (MTKRQNR) are Cytoplasmic-facing. A helical; Signal-anchor for type II membrane protein membrane pass occupies residues 8 to 28 (MVLVALLVIGVSLAGYLGLKA). At 29–140 (FNENLLYFLS…DALEKAKNKQ (112 aa)) the chain is on the periplasmic side. Heme-binding residues include H120 and Y124.

This sequence belongs to the CcmE/CycJ family.

It is found in the cell inner membrane. Functionally, heme chaperone required for the biogenesis of c-type cytochromes. Transiently binds heme delivered by CcmC and transfers the heme to apo-cytochromes in a process facilitated by CcmF and CcmH. This chain is Cytochrome c-type biogenesis protein CcmE, found in Vesicomyosocius okutanii subsp. Calyptogena okutanii (strain HA).